The following is a 175-amino-acid chain: Phosphatidylglycerol/phosphatidylinositol transfer protein (175 aa).

The first 21 residues, Met-1–Ala-21, serve as a signal peptide directing secretion. Positions Arg-22–Gln-37 are excised as a propeptide.

The protein belongs to the NPC2 family. As to quaternary structure, monomer.

It localises to the cytoplasm. Its subcellular location is the cytoplasmic vesicle. The protein resides in the golgi apparatus. Its function is as follows. Catalyzes the intermembrane transfer of phosphatidylglycerol and phosphatidylinositol. This Aspergillus oryzae (strain ATCC 42149 / RIB 40) (Yellow koji mold) protein is Phosphatidylglycerol/phosphatidylinositol transfer protein (pltp).